We begin with the raw amino-acid sequence, 752 residues long: Complement C2 (752 aa).

An N-terminal signal peptide occupies residues 1-20; the sequence is MGPLMVLFCLLFVYTGLADS. Sushi domains follow at residues 22–86, 87–146, and 149–206; these read PSCP…VCKP, VRCP…VCDN, and GHCP…ICRQ. Cystine bridges form between Cys24-Cys64, Cys51-Cys84, Cys89-Cys131, Cys117-Cys144, Cys151-Cys191, and Cys177-Cys204. Asn29 carries an N-linked (GlcNAc...) asparagine glycan. N-linked (GlcNAc...) asparagine glycosylation is present at Asn112. The VWFA domain occupies 254–452; sequence NLYLLLDCSQ…KALHQVFEHM (199 aa). The short motif at 260–264 is the MIDAS-like motif element; sequence DCSQS. Ser262 and Ser264 together coordinate Mg(2+). 2 N-linked (GlcNAc...) asparagine glycosylation sites follow: Asn290 and Asn333. Mg(2+) is bound at residue Thr337. Cystine bridges form between Cys463/Cys581, Cys492/Cys508, and Cys584/Cys600. Residues 464 to 744 enclose the Peptidase S1 domain; the sequence is GVGNMSANAS…MQPWLRQHLG (281 aa). N-linked (GlcNAc...) asparagine glycosylation is found at Asn467 and Asn471. Active-site charge relay system residues include His507 and Asp561. Asn621 and Asn651 each carry an N-linked (GlcNAc...) asparagine glycan. 2 disulfides stabilise this stretch: Cys638–Cys665 and Cys675–Cys705. Ser679 acts as the Charge relay system in catalysis.

The protein belongs to the peptidase S1 family. Serine protease component of the C3 convertase, also named C4bC2b, composed of the serine protease complement C2b and complement C4b. Serine protease component of the C5 convertase, also named C4bC2bC3b, composed of the serine protease complement C2b, complement C3b, as well as complement C4b. The cofactor is Mg(2+). Mn(2+) serves as cofactor. Post-translationally, cleaved and activated by different proteases depending on the complement pathway to generate complement C2a and serine protease complement C2b chains. Cleaved and activated by C1S following activation by the classical complement system. Cleaved and activated by MASP2 following activation by the lectin complement system. Cleaved and activated by GZMK following activation by the GZMK complement system.

The protein resides in the secreted. It localises to the cell surface. It catalyses the reaction Selective cleavage of Arg-|-Ser bond in complement component C3 alpha-chain to form C3a and C3b, and Arg-|-Xaa bond in complement component C5 alpha-chain to form C5a and C5b.. Precursor of the catalytic component of the C3 and C5 convertase complexes, which are part of the complement pathway, a cascade of proteins that leads to phagocytosis and breakdown of pathogens and signaling that strengthens the adaptive immune system. Component C2 is part of the classical, lectin and GZMK complement systems. In terms of biological role, catalytic component of the complement C3 and C5 convertase complexes. Following complement activation, recruited to the surface of pathogens by complement C4b opsonin to form the C3 convertase, or C3b and C4b opsonins to form the C5 convertase. As part of the C3 convertase, cleaves and activate C3 into C3a anaphylatoxin and C3b opsonin, the next components of the complement pathways. As part of the C5 convertase, cleaves and activate C5 into C5a anaphylatoxin and C5b component of the membrane attack complex. The polypeptide is Complement C2 (Gorilla gorilla gorilla (Western lowland gorilla)).